A 361-amino-acid chain; its full sequence is MNLIYNFSAGPAMIPKDVLYQAKKELQNWNQIGCSIMEISHRSKEFIQVALEAEQDLRDLLNISNSYEILFCQGGARGQFAAVPMNLLGNFKETDYINSGYWSNCALIEAKKYCIPKNISVRQKKNGKSFLLKPSQWNISDNSAYIHYCPNETIDGMSIYEEPNFKNKIIVGDFSSFILSRRINIENYGLIYAGAQKNIGPSGITIILIRKDLIGYASKISPSIFNYYIISKYNSMFNTPPTFSWYLSGLVFKWLKKQGGIKKIEQLNQKKSNLLYQIIDNSNFYINDIDKRNRSQMNVVFHLYNSKLDNLFLKEAKNAGLNALKGHNVIGGMRASIYNAMPLEGVQSLAKFMLYFEKKYG.

Arg42 is a binding site for L-glutamate. Pyridoxal 5'-phosphate is bound by residues 76–77, Trp102, Thr153, Asp173, and Gln196; that span reads AR. Position 197 is an N6-(pyridoxal phosphate)lysine (Lys197). Residue 238 to 239 participates in pyridoxal 5'-phosphate binding; sequence NT.

It belongs to the class-V pyridoxal-phosphate-dependent aminotransferase family. SerC subfamily. In terms of assembly, homodimer. It depends on pyridoxal 5'-phosphate as a cofactor.

It is found in the cytoplasm. It carries out the reaction O-phospho-L-serine + 2-oxoglutarate = 3-phosphooxypyruvate + L-glutamate. The catalysed reaction is 4-(phosphooxy)-L-threonine + 2-oxoglutarate = (R)-3-hydroxy-2-oxo-4-phosphooxybutanoate + L-glutamate. The protein operates within amino-acid biosynthesis; L-serine biosynthesis; L-serine from 3-phospho-D-glycerate: step 2/3. Its pathway is cofactor biosynthesis; pyridoxine 5'-phosphate biosynthesis; pyridoxine 5'-phosphate from D-erythrose 4-phosphate: step 3/5. Catalyzes the reversible conversion of 3-phosphohydroxypyruvate to phosphoserine and of 3-hydroxy-2-oxo-4-phosphonooxybutanoate to phosphohydroxythreonine. The protein is Phosphoserine aminotransferase of Buchnera aphidicola subsp. Schizaphis graminum (strain Sg).